The following is a 131-amino-acid chain: Large ribosomal subunit protein bL20 (131 aa).

It belongs to the bacterial ribosomal protein bL20 family.

In terms of biological role, binds directly to 23S ribosomal RNA and is necessary for the in vitro assembly process of the 50S ribosomal subunit. It is not involved in the protein synthesizing functions of that subunit. The sequence is that of Large ribosomal subunit protein bL20 from Mycolicibacterium paratuberculosis (strain ATCC BAA-968 / K-10) (Mycobacterium paratuberculosis).